Reading from the N-terminus, the 127-residue chain is Phosphoribosyl-AMP cyclohydrolase (127 aa).

Residue D75 participates in Mg(2+) binding. C76 provides a ligand contact to Zn(2+). Positions 77 and 79 each coordinate Mg(2+). Zn(2+)-binding residues include C93 and C100.

Belongs to the PRA-CH family. As to quaternary structure, homodimer. Mg(2+) is required as a cofactor. Zn(2+) serves as cofactor.

Its subcellular location is the cytoplasm. It carries out the reaction 1-(5-phospho-beta-D-ribosyl)-5'-AMP + H2O = 1-(5-phospho-beta-D-ribosyl)-5-[(5-phospho-beta-D-ribosylamino)methylideneamino]imidazole-4-carboxamide. Its pathway is amino-acid biosynthesis; L-histidine biosynthesis; L-histidine from 5-phospho-alpha-D-ribose 1-diphosphate: step 3/9. Catalyzes the hydrolysis of the adenine ring of phosphoribosyl-AMP. The chain is Phosphoribosyl-AMP cyclohydrolase from Desulfotalea psychrophila (strain LSv54 / DSM 12343).